The chain runs to 315 residues: Aspartate carbamoyltransferase catalytic subunit (315 aa).

Carbamoyl phosphate-binding residues include R65 and T66. K93 provides a ligand contact to L-aspartate. 3 residues coordinate carbamoyl phosphate: R115, H145, and Q148. Residues R179 and R234 each coordinate L-aspartate. 2 residues coordinate carbamoyl phosphate: G275 and P276.

It belongs to the aspartate/ornithine carbamoyltransferase superfamily. ATCase family. In terms of assembly, heterododecamer (2C3:3R2) of six catalytic PyrB chains organized as two trimers (C3), and six regulatory PyrI chains organized as three dimers (R2).

The enzyme catalyses carbamoyl phosphate + L-aspartate = N-carbamoyl-L-aspartate + phosphate + H(+). It functions in the pathway pyrimidine metabolism; UMP biosynthesis via de novo pathway; (S)-dihydroorotate from bicarbonate: step 2/3. Its function is as follows. Catalyzes the condensation of carbamoyl phosphate and aspartate to form carbamoyl aspartate and inorganic phosphate, the committed step in the de novo pyrimidine nucleotide biosynthesis pathway. The sequence is that of Aspartate carbamoyltransferase catalytic subunit from Xanthomonas euvesicatoria pv. vesicatoria (strain 85-10) (Xanthomonas campestris pv. vesicatoria).